The chain runs to 183 residues: tRNA-splicing endonuclease (183 aa).

Catalysis depends on residues tyrosine 120, histidine 128, and lysine 159.

It belongs to the tRNA-intron endonuclease family. Archaeal short subfamily. As to quaternary structure, homotetramer; although the tetramer contains four active sites, only two participate in the cleavage. Therefore, it should be considered as a dimer of dimers.

The enzyme catalyses pretRNA = a 3'-half-tRNA molecule with a 5'-OH end + a 5'-half-tRNA molecule with a 2',3'-cyclic phosphate end + an intron with a 2',3'-cyclic phosphate and a 5'-hydroxyl terminus.. Its function is as follows. Endonuclease that removes tRNA introns. Cleaves pre-tRNA at the 5'- and 3'-splice sites to release the intron. The products are an intron and two tRNA half-molecules bearing 2',3' cyclic phosphate and 5'-OH termini. Recognizes a pseudosymmetric substrate in which 2 bulged loops of 3 bases are separated by a stem of 4 bp. This Pyrobaculum aerophilum (strain ATCC 51768 / DSM 7523 / JCM 9630 / CIP 104966 / NBRC 100827 / IM2) protein is tRNA-splicing endonuclease.